We begin with the raw amino-acid sequence, 344 residues long: NADH-quinone oxidoreductase subunit H 2 (344 aa).

8 helical membrane passes run 13 to 33 (LPILFKIVAIVLPLILIVAWL), 82 to 102 (ILFLLAPVLAIAPALAVWAVI), 116 to 136 (ALLYILAIGSMSVYGIILAGW), 161 to 181 (MGFALVGVLIAGGSLNLGEIV), 188 to 208 (FWHWFWLPLFPLFLIYFISGV), 240 to 260 (LFFLAEYIEMILVSTLAALMF), 280 to 300 (VPGIVWLLIKTAIFLFFYLWF), and 319 to 339 (VFIPITIVWLLVVGGARVAQL).

It belongs to the complex I subunit 1 family. NDH-1 is composed of 14 different subunits. Subunits NuoA, H, J, K, L, M, N constitute the membrane sector of the complex.

It is found in the cell inner membrane. It carries out the reaction a quinone + NADH + 5 H(+)(in) = a quinol + NAD(+) + 4 H(+)(out). In terms of biological role, NDH-1 shuttles electrons from NADH, via FMN and iron-sulfur (Fe-S) centers, to quinones in the respiratory chain. The immediate electron acceptor for the enzyme in this species is believed to be ubiquinone. Couples the redox reaction to proton translocation (for every two electrons transferred, four hydrogen ions are translocated across the cytoplasmic membrane), and thus conserves the redox energy in a proton gradient. This subunit may bind ubiquinone. This is NADH-quinone oxidoreductase subunit H 2 from Nitrosococcus oceani (strain ATCC 19707 / BCRC 17464 / JCM 30415 / NCIMB 11848 / C-107).